Here is a 460-residue protein sequence, read N- to C-terminus: Serine incorporator 5 (460 aa).

Over 1–36 (MSARCCAGQLACCCGSAGCALCCGCCPKFRQSRSTR) the chain is Extracellular. The chain crosses the membrane as a helical span at residues 37–57 (FMYLFYFTLVIIPCCVMMSPS). The Cytoplasmic segment spans residues 58-89 (VMKQMTEHIPFFEDFCKGIKAGDTCENLVGYS). Residues 90–110 (AVYRVCFGMACFFFVFCVLTF) form a helical membrane-spanning segment. The Extracellular portion of the chain corresponds to 111–124 (KVNNSKSCRASIHN). N-linked (GlcNAc...) asparagine glycosylation is present at Asn-113. A helical membrane pass occupies residues 125–145 (GFWFFKLLLLGAMCSGAFFIP). At 146-156 (DQETFLNVWRY) the chain is on the cytoplasmic side. A helical membrane pass occupies residues 157–177 (VGAVGSFFFICIQLLLIVEFA). Residues 178–197 (HKWNKNWTAGTVRNKLWYAS) lie on the Extracellular side of the membrane. Asn-183 is a glycosylation site (N-linked (GlcNAc...) asparagine). Residues 198-218 (LSLALIMYSIAVGGLALMAVF) form a helical membrane-spanning segment. The Cytoplasmic segment spans residues 219-229 (YTQWDDCMDNK). The chain crosses the membrane as a helical span at residues 230–250 (ILLGVHGGLCVLISLAAISPC). Over 251–258 (VQNRQPHS) the chain is Extracellular. A helical transmembrane segment spans residues 259–279 (GLLQPGLISCYVTYLTFSALT). The Cytoplasmic segment spans residues 280–309 (SKPEKVVKDEHGKNVTICVPDFGQDFRRDE). Residues 310–330 (SMVTWLGTLLLVVCISYSCLT) form a helical membrane-spanning segment. The Extracellular segment spans residues 331–390 (STTRSSSDALQRRYGAPELEVARCCFCFGPDGEDTEEQQNVKEGPRVIYDEKKGTVYSYS). The chain crosses the membrane as a helical span at residues 391–411 (YFHFVLLLASLYVMMTLTSWF). At 412 to 427 (HYENATIETFFVGSWS) the chain is on the cytoplasmic side. Residues 428 to 448 (IFWVKMASCWMCVLLYLWTLV) traverse the membrane as a helical segment. Over 449–460 (APLCCPSRQFSV) the chain is Extracellular.

Belongs to the TDE1 family. In terms of tissue distribution, brain. Expressed at high levels in the white matter and the oligodendroglial cells of the brain. Expressed at low levels in the liver.

It is found in the cell membrane. It catalyses the reaction a 1,2-diacyl-sn-glycero-3-phospho-L-serine(in) = a 1,2-diacyl-sn-glycero-3-phospho-L-serine(out). The catalysed reaction is a 1,2-diacyl-sn-glycero-3-phosphocholine(in) = a 1,2-diacyl-sn-glycero-3-phosphocholine(out). The enzyme catalyses a 1,2-diacyl-sn-glycero-3-phosphoethanolamine(in) = a 1,2-diacyl-sn-glycero-3-phosphoethanolamine(out). Restriction factor required to restrict infectivity of gammaretroviruses: acts by inhibiting an early step of viral infection. Impairs the penetration of the viral particle into the cytoplasm. Non-ATP-dependent, non-specific lipid transporter for phosphatidylserine, phosphatidylcholine, and phosphatidylethanolamine. Functions as a scramblase that flips lipids in both directions across the membrane. Phospholipid scrambling results in gammaretroviral surface exposure of phosphatidylserine and loss of membrane asymmetry, which leads to loss of infectivity. Enhances the incorporation of serine into phosphatidylserine and sphingolipids. May play a role in providing serine molecules for the formation of myelin glycosphingolipids in oligodendrocytes. The protein is Serine incorporator 5 (Serinc5) of Rattus norvegicus (Rat).